Consider the following 826-residue polypeptide: U-box domain-containing protein 4 (826 aa).

Residues 172 to 204 (RSNQEILIEAVALERQKEMAEQSENNAEVEFLD) adopt a coiled-coil conformation. Residues 229 to 303 (AILADFFCPL…ANWCETNDVK (75 aa)) enclose the U-box domain. The disordered stretch occupies residues 330-501 (GADVSARKVS…TRRDLSDFSP (172 aa)). Polar residues predominate over residues 347–360 (ASSSETGKPSFSSR). Basic and acidic residues predominate over residues 391–414 (DARRGSLNDFEDRSNDSRELRTDA). At Ser-396 the chain carries Phosphoserine. Positions 416-428 (GRSSVSSTTRGSV) are enriched in low complexity. Residues 492–501 (TRRDLSDFSP) are compositionally biased toward basic and acidic residues. ARM repeat units lie at residues 530 to 570 (NETR…LLAK), 573 to 612 (MDNR…NLSI), 614 to 653 (DNNK…SLSV), 655 to 694 (EENK…NLSI), 696 to 734 (QENK…NLAT), 736 to 775 (PEGR…QLST), and 778 to 817 (GRFC…YFRN).

The enzyme catalyses S-ubiquitinyl-[E2 ubiquitin-conjugating enzyme]-L-cysteine + [acceptor protein]-L-lysine = [E2 ubiquitin-conjugating enzyme]-L-cysteine + N(6)-ubiquitinyl-[acceptor protein]-L-lysine.. Its pathway is protein modification; protein ubiquitination. Its function is as follows. Functions as an E3 ubiquitin ligase. The polypeptide is U-box domain-containing protein 4 (PUB4) (Arabidopsis thaliana (Mouse-ear cress)).